Here is a 359-residue protein sequence, read N- to C-terminus: uncharacterized protein (359 aa).

It belongs to the glycosyltransferase group 1 family. Glycosyltransferase 4 subfamily.

This is an uncharacterized protein from Bacillus subtilis (strain 168).